The primary structure comprises 283 residues: Pre-protein-C8 (283 aa).

Positions 1-40 (MKEDNNTSEESGRINRRNVLKTVGAAGLFAAGSTGMAAAA) form a signal peptide, tat-type signal. The segment at 61-75 (ARELAKTPAFRELAQ) is helix-loop-helix (HLH) region.

In terms of assembly, immunity protein HalI interacts with Halocin-C8; the interaction is direct. Post-translationally, predicted to be exported by the Tat system. The position of the signal peptide cleavage has not been experimentally proven.

The protein localises to the secreted. Its subcellular location is the cell membrane. Has antibacterial activity against a wide variety of haloarchaeons. Causes cell lysis and death, possibly by disrupting the cell wall. Its function is as follows. Acts as an immunity protein for halocin-C8. Able to block the halocin-C8 activity by sequestering the activity of halocin-C8 through specific and direct binding. This chain is Pre-protein-C8 (proC8), found in Halobacterium sp. (strain AS7092).